A 239-amino-acid polypeptide reads, in one-letter code: MIENQSDNIDIKENDVLNQDNAPEDNSSAAEKTIENDELSPQKTEEINTEELKNTISNNDARLEQLEKEHETLKNQYVRISADFDNFRKRQSRDQDDLKVQLVSKTLTAILPIVDNFERARQQLKPESEEAQALHRSYQGLYKQLVEVLKQQGVSPMRVVGQQFDPNLHEAVLREPSEEFKEDLIVEELQRGYHLEGKVLRHALVKVSMGHGQQNSQEEVEKDTVEEDIDSEENTSEDV.

Disordered regions lie at residues 1 to 50 (MIEN…INTE) and 209 to 239 (MGHG…SEDV). The span at 16–30 (VLNQDNAPEDNSSAA) shows a compositional bias: polar residues. Acidic residues predominate over residues 218–239 (EEVEKDTVEEDIDSEENTSEDV).

Belongs to the GrpE family. In terms of assembly, homodimer.

The protein resides in the cytoplasm. Functionally, participates actively in the response to hyperosmotic and heat shock by preventing the aggregation of stress-denatured proteins, in association with DnaK and GrpE. It is the nucleotide exchange factor for DnaK and may function as a thermosensor. Unfolded proteins bind initially to DnaJ; upon interaction with the DnaJ-bound protein, DnaK hydrolyzes its bound ATP, resulting in the formation of a stable complex. GrpE releases ADP from DnaK; ATP binding to DnaK triggers the release of the substrate protein, thus completing the reaction cycle. Several rounds of ATP-dependent interactions between DnaJ, DnaK and GrpE are required for fully efficient folding. In Prochlorococcus marinus (strain MIT 9312), this protein is Protein GrpE.